The chain runs to 129 residues: Venom CUB domain-containing protein 1 (129 aa).

Residues 1 to 18 form the signal peptide; that stretch reads MKLLGVLITIYCIASTLA. The CUB domain occupies 19 to 121; that stretch reads IDVNVPSNGM…KASCKAYSIT (103 aa). C66 and C83 are disulfide-bonded.

The protein belongs to the venom CUB family. Contains 2 disulfide bonds. Expressed by the venom gland.

It is found in the secreted. The polypeptide is Venom CUB domain-containing protein 1 (Platymeris rhadamanthus (Red spot assassin bug)).